The chain runs to 271 residues: Dipeptidyl-peptidase 6 (271 aa).

2 SH3b domains span residues 1–64 (MNAI…LFDD) and 72–140 (QKAQ…HPKI). The NlpC/P60 domain occupies 148-268 (HAFRENVVQT…DLATTITAIG (121 aa)). The Nucleophile role is filled by Cys178. His224 functions as the Proton acceptor in the catalytic mechanism. His236 is a catalytic residue.

Belongs to the peptidase C40 family.

The protein localises to the cytoplasm. In terms of biological role, involved in cell sporulation. Hydrolyzes gamma-D-Glu-L-(meso)A2pm linkages only in those peptide units that have a free N-terminal L-alanine. The protein is Dipeptidyl-peptidase 6 of Lysinibacillus sphaericus (Bacillus sphaericus).